The chain runs to 84 residues: ATP synthase subunit c (84 aa).

A run of 2 helical transmembrane segments spans residues 9 to 29 (IIGA…GFAI) and 54 to 74 (IVAG…LLFI).

Belongs to the ATPase C chain family. In terms of assembly, F-type ATPases have 2 components, F(1) - the catalytic core - and F(0) - the membrane proton channel. F(1) has five subunits: alpha(3), beta(3), gamma(1), delta(1), epsilon(1). F(0) has three main subunits: a(1), b(2) and c(10-14). The alpha and beta chains form an alternating ring which encloses part of the gamma chain. F(1) is attached to F(0) by a central stalk formed by the gamma and epsilon chains, while a peripheral stalk is formed by the delta and b chains.

Its subcellular location is the cell inner membrane. In terms of biological role, f(1)F(0) ATP synthase produces ATP from ADP in the presence of a proton or sodium gradient. F-type ATPases consist of two structural domains, F(1) containing the extramembraneous catalytic core and F(0) containing the membrane proton channel, linked together by a central stalk and a peripheral stalk. During catalysis, ATP synthesis in the catalytic domain of F(1) is coupled via a rotary mechanism of the central stalk subunits to proton translocation. Functionally, key component of the F(0) channel; it plays a direct role in translocation across the membrane. A homomeric c-ring of between 10-14 subunits forms the central stalk rotor element with the F(1) delta and epsilon subunits. This chain is ATP synthase subunit c, found in Haemophilus influenzae (strain ATCC 51907 / DSM 11121 / KW20 / Rd).